The primary structure comprises 129 residues: Ig lambda-1 chain V region S43 (129 aa).

Positions 1 to 19 are cleaved as a signal peptide; the sequence is MAWISLILSLLALSSGAIS. Position 20 is a pyrrolidone carboxylic acid (Gln-20). Positions 20–125 constitute an Ig-like domain; sequence QAVVTQESAL…HWVFGGGTKL (106 aa).

The chain is Ig lambda-1 chain V region S43 from Mus musculus (Mouse).